A 332-amino-acid chain; its full sequence is MVFPDLLPRRSTVQPVRLMGDERLRLFSGSANPELAQLVARYLGLAPGPLVRKSFADGELYVQIQESIRGCDVYLVQPTCSPVNDSLMELLILIDACRRASARQITAVLPYYGYARADRKTAGRESITAKLVANLITAAGVDRVLAMDLHSAQIQAYFDIPLDHVYGSPVLLQYIKEKQLGDMVIVSPDVGGVSRARAFAKKLDDAPLAIVDKRRQAPNEVEVMNVIGDVKGKTAILVDDMIDTAGTISEAAKVLLRQGAKEVYACATHAVFSSRAIDRLSDGTFTEVLVTNTIPVPPDRRFPQLRVLSVADLIGEAIWRIHEDSSVSSMFR.

57 to 59 (DGE) lines the ATP pocket. Mg(2+) is bound by residues His-150 and Asp-189. The active site involves Lys-213. D-ribose 5-phosphate-binding positions include Arg-215, Asp-239, and 243–247 (DTAGT).

Belongs to the ribose-phosphate pyrophosphokinase family. Class I subfamily. Homohexamer. It depends on Mg(2+) as a cofactor.

The protein localises to the cytoplasm. It carries out the reaction D-ribose 5-phosphate + ATP = 5-phospho-alpha-D-ribose 1-diphosphate + AMP + H(+). It functions in the pathway metabolic intermediate biosynthesis; 5-phospho-alpha-D-ribose 1-diphosphate biosynthesis; 5-phospho-alpha-D-ribose 1-diphosphate from D-ribose 5-phosphate (route I): step 1/1. In terms of biological role, involved in the biosynthesis of the central metabolite phospho-alpha-D-ribosyl-1-pyrophosphate (PRPP) via the transfer of pyrophosphoryl group from ATP to 1-hydroxyl of ribose-5-phosphate (Rib-5-P). This is Ribose-phosphate pyrophosphokinase from Gloeobacter violaceus (strain ATCC 29082 / PCC 7421).